The sequence spans 89 residues: Rho beta-crystallin (89 aa).

Histidine 31 is a substrate binding site.

It belongs to the aldo/keto reductase family. In terms of assembly, monomer.

This is Rho beta-crystallin from Lepidodactylus lugubris (Mourning gecko).